The sequence spans 394 residues: Mannosyl-3-phosphoglycerate synthase (394 aa).

It belongs to the glycosyltransferase 2 family. Mg(2+) serves as cofactor.

The protein localises to the cytoplasm. It carries out the reaction (2R)-3-phosphoglycerate + GDP-alpha-D-mannose = 2-O-(alpha-D-mannosyl)-3-phosphoglycerate + GDP + H(+). Its pathway is carbohydrate biosynthesis; 2-(alpha-D-mannosyl)-D-glycerate biosynthesis; 2-(alpha-D-mannosyl)-D-glycerate from GDP-alpha-D-mannose (MPG route): step 1/2. Functionally, transfers a mannosyl group from GDP-mannose to phosphoglycerate to form mannosyl-3-phosphoglycerate (MPG). The enzyme is absolutely specific for GDP-mannose and 3-phosphoglycerate, and transfers the mannosyl group with retention of configuration. The sequence is that of Mannosyl-3-phosphoglycerate synthase (mngA) from Pyrococcus horikoshii (strain ATCC 700860 / DSM 12428 / JCM 9974 / NBRC 100139 / OT-3).